Reading from the N-terminus, the 341-residue chain is Protein pelota homolog (341 aa).

Belongs to the eukaryotic release factor 1 family. Pelota subfamily. In terms of assembly, monomer. A divalent metal cation serves as cofactor.

It localises to the cytoplasm. In terms of biological role, may function in recognizing stalled ribosomes, interact with stem-loop structures in stalled mRNA molecules, and effect endonucleolytic cleavage of the mRNA. May play a role in the release non-functional ribosomes and degradation of damaged mRNAs. Has endoribonuclease activity. This chain is Protein pelota homolog, found in Methanoregula boonei (strain DSM 21154 / JCM 14090 / 6A8).